The following is a 671-amino-acid chain: Solute carrier family 53 member 1 (671 aa).

Residues 1–193 (MKFAEHLTAH…DIDRLIQETE (193 aa)) form an important for promoting lysosomal/autophagosomal degradation of PXo bodies following inorganic phosphate (Pi) starvation region. Topologically, residues 1-228 (MKFAEHLTAH…EQQSPWTTFK (228 aa)) are cytoplasmic. The 217-residue stretch at 2-218 (KFAEHLTAHI…MKRLRVPPLG (217 aa)) folds into the SPX domain. The interval 152–159 (KILKKHDK) is important for inositol polyphosphate binding. The helical transmembrane segment at 229-253 (VGLFSGAFVVLFITVVIAAMFYGFG) threads the bilayer. Residues 254 to 255 (EN) are Extracellular-facing. Residues 256-287 (WRAGMRMFRAPFLIIECLFLWGVNVYGWRSSG) traverse the membrane as a helical segment. The Cytoplasmic portion of the chain corresponds to 288 to 300 (VNHVLIFELDPRN). Residues 301–328 (HLSEQNIMEVASVFGVIWACCVLSYIFC) traverse the membrane as a helical segment. Over 329–334 (DPLGIP) the chain is Extracellular. The chain crosses the membrane as a helical span at residues 335–356 (QYAAPLCLYTLMAAFLLNPTKT). The segment at residues 357–374 (FHHEARFWAIRILIRVIM) is an intramembrane region (helical). Residues 375–379 (APFCF) are Cytoplasmic-facing. A discontinuously helical transmembrane segment spans residues 380 to 413 (VNFADFWLADQLNSMVPAFLDIPFLICFFGRSPT). Positions 389 and 392 each coordinate phosphate. At 414 to 415 (WH) the chain is on the extracellular side. A discontinuously helical transmembrane segment spans residues 416 to 455 (KAGKAASHCVEYVSLLHPIVAIMPAYFRFAQCIRRYRDTK). The EXS domain maps to 423 to 627 (HCVEYVSLLH…DCSDQTTILR (205 aa)). E456 is a topological domain (cytoplasmic). A helical transmembrane segment spans residues 457–488 (SFPHLVNAAKYATSFFVVIFAHKYHTTTDTYP). Phosphate-binding residues include K466 and Y467. Residues 489–491 (LSK) lie on the Extracellular side of the membrane. Residues 492–519 (ENPWFYCWITAAIFSSCYAYTWDIKMDW) form a helical membrane-spanning segment. Residues 520 to 538 (GLFDSKAGDNRFLREEIVY) are Cytoplasmic-facing. Residues 539–570 (SSTWFYYFGIIEDLILRFSWTLSMSLIEAGYI) traverse the membrane as a discontinuously helical segment. Phosphate is bound by residues R555, R586, and R587. Residues 571–609 (EGDVMMTILSPLEVFRRFIWNYFRLENEHLNNVGKFRAV) traverse the membrane as a helical segment. The Cytoplasmic portion of the chain corresponds to 610-671 (RDISVAPMDC…QGESIEDLCS (62 aa)).

It belongs to the SYG1 (TC 2.A.94) family. In terms of assembly, homodimer. Interacts with the FAR/SIN/STRIPAK complex members Cka and Pp2A-29B. In terms of tissue distribution, detected in PXo bodies found in the enterocytes and progenitors of the midgut and in the hindgut, but rarely occur in the Malpighian tubules, crop, brain, muscles and germlines (at protein level).

Its subcellular location is the membrane. The enzyme catalyses phosphate(in) = phosphate(out). In terms of biological role, inorganic ion transporter that mediates phosphate ion export across the cell membrane. Plays a major role in phosphate homeostasis, preventing intracellular phosphate accumulation and possible calcium phosphate precipitation, ultimately preserving calcium signaling. Binds inositol hexakisphosphate (Ins6P) and similar inositol polyphosphates, such as 5-diphospho-inositol pentakisphosphate (5-InsP7), which are important intracellular signaling molecules involved in regulation of phosphate flux. In enterocytes and differentiating progenitors of the gut, promotes the biogenesis and maintenance of organelles called PXo bodies that store intracellular inorganic phosphate (Pi), and also regulates Cka-JNK mediated tissue homeostasis in response to Pi availability in these tissues. Under conditions of adequate Pi, transports Pi into PXo bodies which convert and store the Pi in the form of phospholipids. It also inhibits Cka at the post-transcriptional level to prevent Cka-bsk/JNK mediated cell proliferation. Upon Pi starvation, Pxo expression is down-regulated resulting in the PXo bodies decreasing in phospholipid content until they undergo lysosomal/autophagosomal degradation and release the stored Pi back into the cytosol for use by the cell. Decrease in Pxo expression also activates the Cka protein, which moves to the nucleus to activate bsk/JNK which then induces nearby progenitor cells to proliferate and form new absorptive cells, probably helping the organism to cope with the nutrient deficiency by maximizing absorption of dietary Pi. This chain is Solute carrier family 53 member 1, found in Drosophila melanogaster (Fruit fly).